The sequence spans 144 residues: MESPLGSDLSRLVRIWRALIDHRLKPLELTQTHWITLHNICQLPPEQSQIQLAKAIGIEQPSLVRTLDQLEEKGLITRHTCSNDRRAKRIKLTKSAEPIIQKVNNVIHTTREEILNGINQEEIQWLSQMISKLEKNILELYNKS.

One can recognise an HTH marR-type domain in the interval 2 to 135 (ESPLGSDLSR…LSQMISKLEK (134 aa)). A DNA-binding region (H-T-H motif) is located at residues 49–72 (QIQLAKAIGIEQPSLVRTLDQLEE).

This sequence belongs to the SlyA family. In terms of assembly, homodimer.

Its function is as follows. Transcription regulator that can specifically activate or repress expression of target genes. In Wigglesworthia glossinidia brevipalpis, this protein is Transcriptional regulator SlyA.